Here is a 334-residue protein sequence, read N- to C-terminus: D-alanine--D-alanine ligase (334 aa).

The ATP-grasp domain occupies 111-315 (KRVCLSHGVP…YEDLCIEILR (205 aa)). An ATP-binding site is contributed by 141-196 (AAEFGLPLMLKAPHEGSTIGIAKVETAEGMQAGFDLCAKYEAVVLVEQFVKGRELT). Mg(2+) contacts are provided by D268, E282, and N284.

Belongs to the D-alanine--D-alanine ligase family. It depends on Mg(2+) as a cofactor. Requires Mn(2+) as cofactor.

Its subcellular location is the cytoplasm. It carries out the reaction 2 D-alanine + ATP = D-alanyl-D-alanine + ADP + phosphate + H(+). It participates in cell wall biogenesis; peptidoglycan biosynthesis. Its function is as follows. Cell wall formation. The polypeptide is D-alanine--D-alanine ligase (Herminiimonas arsenicoxydans).